We begin with the raw amino-acid sequence, 274 residues long: Bis(5'-nucleosyl)-tetraphosphatase, symmetrical (274 aa).

The protein belongs to the Ap4A hydrolase family.

The catalysed reaction is P(1),P(4)-bis(5'-adenosyl) tetraphosphate + H2O = 2 ADP + 2 H(+). In terms of biological role, hydrolyzes diadenosine 5',5'''-P1,P4-tetraphosphate to yield ADP. The chain is Bis(5'-nucleosyl)-tetraphosphatase, symmetrical from Janthinobacterium sp. (strain Marseille) (Minibacterium massiliensis).